Consider the following 347-residue polypeptide: Quinolinate synthase (347 aa).

Iminosuccinate-binding residues include His47 and Ser68. Residue Cys113 coordinates [4Fe-4S] cluster. Iminosuccinate-binding positions include 139-141 (YAN) and Ser156. Residue Cys200 participates in [4Fe-4S] cluster binding. Residues 226–228 (HPE) and Thr243 each bind iminosuccinate. Cys297 is a binding site for [4Fe-4S] cluster.

It belongs to the quinolinate synthase family. Type 1 subfamily. It depends on [4Fe-4S] cluster as a cofactor.

It is found in the cytoplasm. The catalysed reaction is iminosuccinate + dihydroxyacetone phosphate = quinolinate + phosphate + 2 H2O + H(+). It participates in cofactor biosynthesis; NAD(+) biosynthesis; quinolinate from iminoaspartate: step 1/1. In terms of biological role, catalyzes the condensation of iminoaspartate with dihydroxyacetone phosphate to form quinolinate. This Shigella boydii serotype 4 (strain Sb227) protein is Quinolinate synthase.